The sequence spans 81 residues: ATP synthase subunit c (81 aa).

2 consecutive transmembrane segments (helical) span residues 3 to 23 and 57 to 77; these read PLIAAASVVAAALAVGLGAIG and LAFMEALTIYGLVVSLVLLFA.

This sequence belongs to the ATPase C chain family. As to quaternary structure, F-type ATPases have 2 components, F(1) - the catalytic core - and F(0) - the membrane proton channel. F(1) has five subunits: alpha(3), beta(3), gamma(1), delta(1), epsilon(1). F(0) has four main subunits: a(1), b(1), b'(1) and c(10-14). The alpha and beta chains form an alternating ring which encloses part of the gamma chain. F(1) is attached to F(0) by a central stalk formed by the gamma and epsilon chains, while a peripheral stalk is formed by the delta, b and b' chains.

It is found in the cellular thylakoid membrane. In terms of biological role, f(1)F(0) ATP synthase produces ATP from ADP in the presence of a proton or sodium gradient. F-type ATPases consist of two structural domains, F(1) containing the extramembraneous catalytic core and F(0) containing the membrane proton channel, linked together by a central stalk and a peripheral stalk. During catalysis, ATP synthesis in the catalytic domain of F(1) is coupled via a rotary mechanism of the central stalk subunits to proton translocation. Functionally, key component of the F(0) channel; it plays a direct role in translocation across the membrane. A homomeric c-ring of between 10-14 subunits forms the central stalk rotor element with the F(1) delta and epsilon subunits. In Trichodesmium erythraeum (strain IMS101), this protein is ATP synthase subunit c.